The primary structure comprises 274 residues: Speedy protein C (274 aa).

The tract at residues 37-169 (HQEVQAFLSL…FHWAWTRDRR (133 aa)) is speedy/Ringo box; Required for CDK-binding.

Belongs to the Speedy/Ringo family. In terms of assembly, interacts with CDK1 and CDK2. Interacts with AURKB. Expressed in a variety of tissues including bone marrow, kidney, small intestine, liver, placenta and testis.

The protein localises to the cytoplasm. Its function is as follows. Promotes progression through the cell cycle via binding and activation of CDK1 and CDK2. Involved in the spindle-assembly checkpoint. Required for recruitment of MAD2L1, BUBR1 and BUB1 to kinetochores. Required for the correct localization of the active form of Aurora B in prometaphase. In Homo sapiens (Human), this protein is Speedy protein C.